Consider the following 147-residue polypeptide: Small ribosomal subunit protein uS5 (147 aa).

One can recognise an S5 DRBM domain in the interval 9–72 (FEEVIVDIGR…DDAFKNIVEV (64 aa)).

Belongs to the universal ribosomal protein uS5 family. In terms of assembly, part of the 30S ribosomal subunit. Contacts proteins S4 and S8.

Functionally, with S4 and S12 plays an important role in translational accuracy. Its function is as follows. Located at the back of the 30S subunit body where it stabilizes the conformation of the head with respect to the body. This Campylobacter fetus subsp. fetus (strain 82-40) protein is Small ribosomal subunit protein uS5.